A 501-amino-acid polypeptide reads, in one-letter code: CUGBP Elav-like family member 1 (501 aa).

Residues 2–196 form a binds strongly to URE region; it reads NGSLDHPDQP…DTQKDKEQKR (195 aa). RRM domains follow at residues 16–99 and 108–188; these read IKMF…PADS and RKLF…FADT. Composition is skewed to low complexity over residues 274–298 and 312–323; these read PTGSSALTTSSSPLSVLTSSGTPSG and SSPTSSTSSSVN. Residues 274 to 323 form a disordered region; sequence PTGSSALTTSSSPLSVLTSSGTPSGQPAQSAWDAYKAGSSPTSSTSSSVN. A binds strongly to URE region spans residues 397-501; sequence LLSQQNVSAA…KRSKNDSKPY (105 aa). The 79-residue stretch at 416-494 folds into the RRM 3 domain; the sequence is ANLFIYHLPQ…KRLKVQLKRS (79 aa).

The protein belongs to the CELF/BRUNOL family.

It localises to the nucleus. Its subcellular location is the cytoplasm. RNA-binding protein implicated in the regulation of several post-transcriptional events. May be involved in mRNA translation activation and stability. Involved in the regulation of muscle-specific splicing of alpha actinin pre-mRNAs via the binding to the UR-repeat element (URE) at the branch point of the non-muscle (NM) exon. In Danio rerio (Zebrafish), this protein is CUGBP Elav-like family member 1 (celf1).